The chain runs to 315 residues: Acetyl-coenzyme A carboxylase carboxyl transferase subunit alpha (315 aa).

A CoA carboxyltransferase C-terminal domain is found at 39–293; the sequence is RLQDKSSTLT…RGELASQLAM (255 aa).

It belongs to the AccA family. Acetyl-CoA carboxylase is a heterohexamer composed of biotin carboxyl carrier protein (AccB), biotin carboxylase (AccC) and two subunits each of ACCase subunit alpha (AccA) and ACCase subunit beta (AccD).

Its subcellular location is the cytoplasm. The catalysed reaction is N(6)-carboxybiotinyl-L-lysyl-[protein] + acetyl-CoA = N(6)-biotinyl-L-lysyl-[protein] + malonyl-CoA. Its pathway is lipid metabolism; malonyl-CoA biosynthesis; malonyl-CoA from acetyl-CoA: step 1/1. Its function is as follows. Component of the acetyl coenzyme A carboxylase (ACC) complex. First, biotin carboxylase catalyzes the carboxylation of biotin on its carrier protein (BCCP) and then the CO(2) group is transferred by the carboxyltransferase to acetyl-CoA to form malonyl-CoA. The protein is Acetyl-coenzyme A carboxylase carboxyl transferase subunit alpha of Pseudomonas fluorescens (strain SBW25).